A 284-amino-acid chain; its full sequence is 4-diphosphocytidyl-2-C-methyl-D-erythritol kinase (284 aa).

Residue K14 is part of the active site. 98 to 108 (PMGGGLGGGSS) is an ATP binding site. D140 is an active-site residue.

Belongs to the GHMP kinase family. IspE subfamily.

It catalyses the reaction 4-CDP-2-C-methyl-D-erythritol + ATP = 4-CDP-2-C-methyl-D-erythritol 2-phosphate + ADP + H(+). The protein operates within isoprenoid biosynthesis; isopentenyl diphosphate biosynthesis via DXP pathway; isopentenyl diphosphate from 1-deoxy-D-xylulose 5-phosphate: step 3/6. Functionally, catalyzes the phosphorylation of the position 2 hydroxy group of 4-diphosphocytidyl-2C-methyl-D-erythritol. This Shewanella denitrificans (strain OS217 / ATCC BAA-1090 / DSM 15013) protein is 4-diphosphocytidyl-2-C-methyl-D-erythritol kinase.